The following is a 543-amino-acid chain: Cytochrome P450 1B1 (543 aa).

C470 provides a ligand contact to heme.

This sequence belongs to the cytochrome P450 family. The cofactor is heme. As to expression, expressed in heart, brain, lung, skeletal muscle, kidney, spleen, thymus, prostate, testis, ovary, small intestine, colon, and peripheral blood leukocytes. Expressed in retinal endothelial cells and umbilical vein endothelial cells (at protein level).

The protein localises to the endoplasmic reticulum membrane. It is found in the microsome membrane. The protein resides in the mitochondrion. The catalysed reaction is an organic molecule + reduced [NADPH--hemoprotein reductase] + O2 = an alcohol + oxidized [NADPH--hemoprotein reductase] + H2O + H(+). It catalyses the reaction 17beta-estradiol + reduced [NADPH--hemoprotein reductase] + O2 = 2-hydroxy-17beta-estradiol + oxidized [NADPH--hemoprotein reductase] + H2O + H(+). The enzyme catalyses 17beta-estradiol + reduced [NADPH--hemoprotein reductase] + O2 = 4-hydroxy-17beta-estradiol + oxidized [NADPH--hemoprotein reductase] + H2O + H(+). It carries out the reaction estrone + reduced [NADPH--hemoprotein reductase] + O2 = 2-hydroxyestrone + oxidized [NADPH--hemoprotein reductase] + H2O + H(+). The catalysed reaction is estrone + reduced [NADPH--hemoprotein reductase] + O2 = 4-hydroxyestrone + oxidized [NADPH--hemoprotein reductase] + H2O + H(+). It catalyses the reaction testosterone + reduced [NADPH--hemoprotein reductase] + O2 = 6beta,17beta-dihydroxyandrost-4-en-3-one + oxidized [NADPH--hemoprotein reductase] + H2O + H(+). The enzyme catalyses progesterone + reduced [NADPH--hemoprotein reductase] + O2 = 6beta-hydroxyprogesterone + oxidized [NADPH--hemoprotein reductase] + H2O + H(+). It carries out the reaction progesterone + reduced [NADPH--hemoprotein reductase] + O2 = 16alpha-hydroxyprogesterone + oxidized [NADPH--hemoprotein reductase] + H2O + H(+). The catalysed reaction is all-trans-retinol + reduced [NADPH--hemoprotein reductase] + O2 = all-trans-retinal + oxidized [NADPH--hemoprotein reductase] + 2 H2O + H(+). It catalyses the reaction all-trans-retinal + reduced [NADPH--hemoprotein reductase] + O2 = all-trans-retinoate + oxidized [NADPH--hemoprotein reductase] + H2O + 2 H(+). The enzyme catalyses (5Z,8Z,11Z,14Z)-eicosatetraenoate + reduced [NADPH--hemoprotein reductase] + O2 = (8R,9S)-epoxy-(5Z,11Z,14Z)-eicosatrienoate + oxidized [NADPH--hemoprotein reductase] + H2O + H(+). It carries out the reaction (5Z,8Z,11Z,14Z)-eicosatetraenoate + reduced [NADPH--hemoprotein reductase] + O2 = (11R,12S)-epoxy-(5Z,8Z,14Z)-eicosatrienoate + oxidized [NADPH--hemoprotein reductase] + H2O + H(+). The catalysed reaction is (5Z,8Z,11Z,14Z)-eicosatetraenoate + reduced [NADPH--hemoprotein reductase] + O2 = (11S,12R)-epoxy-(5Z,8Z,14Z)-eicosatrienoate + oxidized [NADPH--hemoprotein reductase] + H2O + H(+). It catalyses the reaction (5Z,8Z,11Z,14Z)-eicosatetraenoate + reduced [NADPH--hemoprotein reductase] + O2 = (14R,15S)-epoxy-(5Z,8Z,11Z)-eicosatrienoate + oxidized [NADPH--hemoprotein reductase] + H2O + H(+). The enzyme catalyses (5S)-hydroperoxy-(6E,8Z,11Z,14Z)-eicosatetraenoate = 5-oxo-(6E,8Z,11Z,14Z)-eicosatetraenoate + H2O. It carries out the reaction (12S)-hydroperoxy-(5Z,8Z,10E,14Z)-eicosatetraenoate = 12-oxo-(5Z,8Z,10E,14Z)-eicosatetraenoate + H2O. The catalysed reaction is (13S)-hydroperoxy-(9Z,11E)-octadecadienoate = 13-oxo-(9Z,11E)-octadecadienoate + H2O. It catalyses the reaction (15S)-hydroperoxy-(5Z,8Z,11Z,13E)-eicosatetraenoate = 15-oxo-(5Z,8Z,11Z,13E)-eicosatetraenoate + H2O. It functions in the pathway steroid hormone biosynthesis. Its pathway is cofactor metabolism; retinol metabolism. It participates in lipid metabolism; arachidonate metabolism. Enzyme activity is increased by liposomes containing anionic phospholipids, phosphatidic acid and cardiolipin. Inhibited by naringenin with an IC(50) of 5 uM. Enzyme activity is increased by cytochrome b5. A cytochrome P450 monooxygenase involved in the metabolism of various endogenous substrates, including fatty acids, steroid hormones and vitamins. Mechanistically, uses molecular oxygen inserting one oxygen atom into a substrate, and reducing the second into a water molecule, with two electrons provided by NADPH via cytochrome P450 reductase (NADPH--hemoprotein reductase). Exhibits catalytic activity for the formation of hydroxyestrogens from estrone (E1) and 17beta-estradiol (E2), namely 2- and 4-hydroxy E1 and E2. Displays a predominant hydroxylase activity toward E2 at the C-4 position. Metabolizes testosterone and progesterone to B or D ring hydroxylated metabolites. May act as a major enzyme for all-trans retinoic acid biosynthesis in extrahepatic tissues. Catalyzes two successive oxidative transformation of all-trans retinol to all-trans retinal and then to the active form all-trans retinoic acid. Catalyzes the epoxidation of double bonds of certain PUFA. Converts arachidonic acid toward epoxyeicosatrienoic acid (EpETrE) regioisomers, 8,9-, 11,12-, and 14,15- EpETrE, that function as lipid mediators in the vascular system. Additionally, displays dehydratase activity toward oxygenated eicosanoids hydroperoxyeicosatetraenoates (HpETEs). This activity is independent of cytochrome P450 reductase, NADPH, and O2. Also involved in the oxidative metabolism of xenobiotics, particularly converting polycyclic aromatic hydrocarbons and heterocyclic aryl amines procarcinogens to DNA-damaging products. Plays an important role in retinal vascular development. Under hyperoxic O2 conditions, promotes retinal angiogenesis and capillary morphogenesis, likely by metabolizing the oxygenated products generated during the oxidative stress. Also, contributes to oxidative homeostasis and ultrastructural organization and function of trabecular meshwork tissue through modulation of POSTN expression. This is Cytochrome P450 1B1 from Homo sapiens (Human).